The sequence spans 99 residues: Putative endopeptidase RzpR (99 aa).

The protein is Putative endopeptidase RzpR (rzpR) of Escherichia coli (strain K12).